An 89-amino-acid polypeptide reads, in one-letter code: Small ribosomal subunit protein uS15 (89 aa).

This sequence belongs to the universal ribosomal protein uS15 family. As to quaternary structure, part of the 30S ribosomal subunit. Forms a bridge to the 50S subunit in the 70S ribosome, contacting the 23S rRNA.

Its function is as follows. One of the primary rRNA binding proteins, it binds directly to 16S rRNA where it helps nucleate assembly of the platform of the 30S subunit by binding and bridging several RNA helices of the 16S rRNA. Forms an intersubunit bridge (bridge B4) with the 23S rRNA of the 50S subunit in the ribosome. The sequence is that of Small ribosomal subunit protein uS15 from Hahella chejuensis (strain KCTC 2396).